A 360-amino-acid polypeptide reads, in one-letter code: Heme A synthase (360 aa).

9 helical membrane passes run 29-49 (WLFA…ATRL), 111-131 (FLGR…WWTG), 139-159 (LGLL…WIMV), 175-195 (LAAH…LAAG), 210-230 (LTAL…GLVA), 242-262 (PLMD…TPWI), 269-289 (VALV…VAAL), 309-329 (AILG…LLAV), and 330-350 (PLWA…MAAV). His-276 lines the heme pocket. Heme is bound at residue His-337.

This sequence belongs to the COX15/CtaA family. Type 2 subfamily. Interacts with CtaB. Requires heme b as cofactor.

It is found in the cell membrane. The catalysed reaction is Fe(II)-heme o + 2 A + H2O = Fe(II)-heme a + 2 AH2. Its pathway is porphyrin-containing compound metabolism; heme A biosynthesis; heme A from heme O: step 1/1. In terms of biological role, catalyzes the conversion of heme O to heme A by two successive hydroxylations of the methyl group at C8. The first hydroxylation forms heme I, the second hydroxylation results in an unstable dihydroxymethyl group, which spontaneously dehydrates, resulting in the formyl group of heme A. The polypeptide is Heme A synthase (Methylobacterium nodulans (strain LMG 21967 / CNCM I-2342 / ORS 2060)).